A 259-amino-acid chain; its full sequence is MKDEKPLILVTNDDGILAPGIRALISVMETIGDVVVVAPDKPQSAMGHAITINNTLFLDKISKDDDTITEYSCSGTPVDCVKLAVNEILKRKPDLCVSGINHGSNSSINVIYSGTMSAAVEAGIEGIQAIGFSLLDFDWNADFEPAKAFVKKITLETLKNKLPPGVVLNVNFPKLSEKEIKGIKVCRQAKAYYAQKFDKRQTPFGKDYYWLTGKFTNEDNGEDTDEWALENGYISVVPVQFDLTAHHTMQQLNTWKLNG.

Positions 13, 14, 44, and 101 each coordinate a divalent metal cation.

It belongs to the SurE nucleotidase family. A divalent metal cation serves as cofactor.

It is found in the cytoplasm. It carries out the reaction a ribonucleoside 5'-phosphate + H2O = a ribonucleoside + phosphate. In terms of biological role, nucleotidase that shows phosphatase activity on nucleoside 5'-monophosphates. The chain is 5'-nucleotidase SurE from Flavobacterium johnsoniae (strain ATCC 17061 / DSM 2064 / JCM 8514 / BCRC 14874 / CCUG 350202 / NBRC 14942 / NCIMB 11054 / UW101) (Cytophaga johnsonae).